We begin with the raw amino-acid sequence, 553 residues long: Membrane protein insertase YidC (553 aa).

The next 5 membrane-spanning stretches (helical) occupy residues 7–24 (VLWV…DNWQ), 365–385 (WGWA…PLSA), 435–455 (LPVV…LASV), 474–494 (PYFI…SLNP), and 509–529 (PIAF…YYVV).

Belongs to the OXA1/ALB3/YidC family. Type 1 subfamily. As to quaternary structure, interacts with the Sec translocase complex via SecD. Specifically interacts with transmembrane segments of nascent integral membrane proteins during membrane integration.

The protein resides in the cell inner membrane. Functionally, required for the insertion and/or proper folding and/or complex formation of integral membrane proteins into the membrane. Involved in integration of membrane proteins that insert both dependently and independently of the Sec translocase complex, as well as at least some lipoproteins. Aids folding of multispanning membrane proteins. This chain is Membrane protein insertase YidC, found in Burkholderia multivorans (strain ATCC 17616 / 249).